The chain runs to 436 residues: MSDSTWMSADPHLASSLSPSQDERMRSPQNLHSQEDDDSSSESGSGNGSSTLNPSTSSSTQGDPAFPEMNGNGAVAPMDFTTAAEDQPINLCDKLPPATALGTPSYPSDGCGADGLRSRVKYGVKTTPESPPYSSGSYDSIKTEVSGCPEDLTVGRAPTADDDDDDHDDHEDNDKMNDSEGMDPERLKAFNMFVRLFVDENLDRMVPISKQPKEKIQAIIESCSRQFPEFQERARKRIRTYHKSCRRMKKNGMEMTRPTPPHLTSAMAENILAAACESETRKAAKRMRLEIYQSSQDEPIALDKQHSRDSAAITHSTYSLPASSYSQDPVYANGGLNYSYRGYGALSSNLQPPASLQTGNHSNGPTDLSMKGGASTTSTTPTPTPSSTSTSRPVPTAQLSPTEISAVRQLIAGYRESAAFLLRSADELENLILQQN.

The interval 1–184 is disordered; it reads MSDSTWMSAD…KMNDSEGMDP (184 aa). Over residues 41–61 the composition is skewed to low complexity; it reads SESGSGNGSSTLNPSTSSSTQ. Serine 130 bears the Phosphoserine mark. The span at 160–169 shows a compositional bias: acidic residues; the sequence is ADDDDDDHDD. Residues 170-184 show a composition bias toward basic and acidic residues; sequence HEDNDKMNDSEGMDP. Serine 295 is modified (phosphoserine). The segment covering 351–366 has biased composition (polar residues); it reads QPPASLQTGNHSNGPT. Residues 351–400 form a disordered region; sequence QPPASLQTGNHSNGPTDLSMKGGASTTSTTPTPTPSSTSTSRPVPTAQLS. Low complexity predominate over residues 375 to 396; it reads STTSTTPTPTPSSTSTSRPVPT.

The polypeptide is Nucleolar protein 4-like (NOL4L) (Pongo abelii (Sumatran orangutan)).